The primary structure comprises 236 residues: Biosynthetic peptidoglycan transglycosylase (236 aa).

A helical membrane pass occupies residues 20–40; sequence LVFIVLSVLILPYALIGLYLL.

This sequence belongs to the glycosyltransferase 51 family.

It is found in the cell inner membrane. The catalysed reaction is [GlcNAc-(1-&gt;4)-Mur2Ac(oyl-L-Ala-gamma-D-Glu-L-Lys-D-Ala-D-Ala)](n)-di-trans,octa-cis-undecaprenyl diphosphate + beta-D-GlcNAc-(1-&gt;4)-Mur2Ac(oyl-L-Ala-gamma-D-Glu-L-Lys-D-Ala-D-Ala)-di-trans,octa-cis-undecaprenyl diphosphate = [GlcNAc-(1-&gt;4)-Mur2Ac(oyl-L-Ala-gamma-D-Glu-L-Lys-D-Ala-D-Ala)](n+1)-di-trans,octa-cis-undecaprenyl diphosphate + di-trans,octa-cis-undecaprenyl diphosphate + H(+). It functions in the pathway cell wall biogenesis; peptidoglycan biosynthesis. Functionally, peptidoglycan polymerase that catalyzes glycan chain elongation from lipid-linked precursors. This Rhizobium meliloti (strain 1021) (Ensifer meliloti) protein is Biosynthetic peptidoglycan transglycosylase.